The chain runs to 61 residues: uncharacterized protein (61 aa).

This is an uncharacterized protein from Acidianus convivator (ATV).